A 60-amino-acid polypeptide reads, in one-letter code: Conotoxin Cal6.30 (60 aa).

Positions 1–22 (MKVTCVLTLAVLILTIGQIANA) are cleaved as a signal peptide. Cystine bridges form between cysteine 31-cysteine 47, cysteine 38-cysteine 51, and cysteine 46-cysteine 55.

As to expression, expressed by the venom duct.

Its subcellular location is the secreted. In terms of biological role, probable neurotoxin. The sequence is that of Conotoxin Cal6.30 from Californiconus californicus (California cone).